A 240-amino-acid polypeptide reads, in one-letter code: Probable transcriptional regulatory protein HP_0162 (240 aa).

It belongs to the TACO1 family.

Its subcellular location is the cytoplasm. The chain is Probable transcriptional regulatory protein HP_0162 from Helicobacter pylori (strain ATCC 700392 / 26695) (Campylobacter pylori).